A 104-amino-acid chain; its full sequence is Iron-sulfur cluster assembly protein CyaY (104 aa).

Belongs to the frataxin family.

Involved in iron-sulfur (Fe-S) cluster assembly. May act as a regulator of Fe-S biogenesis. This Aliivibrio fischeri (strain ATCC 700601 / ES114) (Vibrio fischeri) protein is Iron-sulfur cluster assembly protein CyaY.